The primary structure comprises 214 residues: Homologous-pairing protein 2 homolog (214 aa).

Residues 79 to 147 (SDSELKDLDA…EHKLTNIKSA (69 aa)) are a coiled coil. The interval 115-179 (TSSLTTEEML…WKKRKRMATD (65 aa)) is DNA-binding.

The protein belongs to the HOP2 family.

The protein localises to the nucleus. Plays an important role in meiotic recombination. Stimulates DMC1-mediated strand exchange required for pairing of homologous chromosomes during meiosis. The sequence is that of Homologous-pairing protein 2 homolog (psmc3ip) from Xenopus laevis (African clawed frog).